The following is a 229-amino-acid chain: Cytidylate kinase (229 aa).

12 to 20 lines the ATP pocket; sequence GPSGAGKGT.

The protein belongs to the cytidylate kinase family. Type 1 subfamily.

It is found in the cytoplasm. It catalyses the reaction CMP + ATP = CDP + ADP. The enzyme catalyses dCMP + ATP = dCDP + ADP. The chain is Cytidylate kinase from Pseudomonas aeruginosa (strain LESB58).